Here is a 118-residue protein sequence, read N- to C-terminus: Small ribosomal subunit protein uS13 (118 aa).

The interval 94-118 (SLPLRGQRTKTNARTRKGPRKPIKK) is disordered.

Belongs to the universal ribosomal protein uS13 family. In terms of assembly, part of the 30S ribosomal subunit. Forms a loose heterodimer with protein S19. Forms two bridges to the 50S subunit in the 70S ribosome.

In terms of biological role, located at the top of the head of the 30S subunit, it contacts several helices of the 16S rRNA. In the 70S ribosome it contacts the 23S rRNA (bridge B1a) and protein L5 of the 50S subunit (bridge B1b), connecting the 2 subunits; these bridges are implicated in subunit movement. Contacts the tRNAs in the A and P-sites. This chain is Small ribosomal subunit protein uS13, found in Vibrio cholerae serotype O1 (strain ATCC 39315 / El Tor Inaba N16961).